Consider the following 210-residue polypeptide: Na(+)-translocating NADH-quinone reductase subunit D (210 aa).

The next 5 helical transmembrane spans lie at phenylalanine 42–isoleucine 62, isoleucine 72–alanine 92, valine 103–methionine 123, leucine 131–phenylalanine 151, and asparagine 178–isoleucine 198.

It belongs to the NqrDE/RnfAE family. As to quaternary structure, composed of six subunits; NqrA, NqrB, NqrC, NqrD, NqrE and NqrF.

Its subcellular location is the cell inner membrane. The catalysed reaction is a ubiquinone + n Na(+)(in) + NADH + H(+) = a ubiquinol + n Na(+)(out) + NAD(+). NQR complex catalyzes the reduction of ubiquinone-1 to ubiquinol by two successive reactions, coupled with the transport of Na(+) ions from the cytoplasm to the periplasm. NqrA to NqrE are probably involved in the second step, the conversion of ubisemiquinone to ubiquinol. In Vibrio campbellii (strain ATCC BAA-1116), this protein is Na(+)-translocating NADH-quinone reductase subunit D.